We begin with the raw amino-acid sequence, 232 residues long: Ion-translocating oxidoreductase complex subunit E (232 aa).

6 helical membrane-spanning segments follow: residues 18 to 38 (GLVQ…LTNA), 39 to 59 (LGLG…VSLV), 69 to 89 (IPVF…VINA), 93 to 113 (GLYL…VIIG), 128 to 148 (AFDG…LGAV), and 182 to 202 (SFLL…LIAG).

This sequence belongs to the NqrDE/RnfAE family. As to quaternary structure, the complex is composed of six subunits: RnfA, RnfB, RnfC, RnfD, RnfE and RnfG.

Its subcellular location is the cell inner membrane. Functionally, part of a membrane-bound complex that couples electron transfer with translocation of ions across the membrane. This Shewanella amazonensis (strain ATCC BAA-1098 / SB2B) protein is Ion-translocating oxidoreductase complex subunit E.